The primary structure comprises 1085 residues: MAPRVAPGGSQQFLGKQGLKAKNPVSTPNSHFRSASNPRKRREPPTIDTGYPDRSDTNSPTDHALHDENETNINVVVRVRGRTDQEVRDNSSLAVSTSGAMGAELAIQSDPSSMLVTKTYAFDKVFGPEADQLMLFENSVAPMLEQVLNGYNCTIFAYGQTGTGKTYTMSGDLSDSDGILSEGAGLIPRALYQLFSSLDNSNQEYAVKCSYYELYNEEIRDLLVSEELRKPARVFEDTSRRGNVVITGIEESYIKNAGDGLRLLREGSHRRQVAATKCNDLSSRSHSIFTITLHRKVSSGMTDETNSLTINNNSDDLLRASKLHMVDLAGSENIGRSGAENKRARETGMINQSLLTLGRVINALVEKAHHIPYRESKLTRLLQDSLGGKTKTSMIVTVSSTNTNLEETISTLEYAARAKSIRNKPQNNQLVFRKVLIKDLVLDIERLKNDLNATRKKNGVYLAESTYKELMDRVQNKDLLCQEQARKLEVLDLNVKSSREQLQYVSKSNQEHKKEVEALQLQLVNSSTELESVKSENEKLKNELVLEIEKRKKYETNEAKITTVATDLSQYYRESKEYIASLYEKLDRTERNNKENENNFWNLKFNLLTMLRSFHGSFTDETNGYFTLLNDFNASMEELLNTHSNQLLISMTKITEHFQSLDEALQSARSSCAVPNSSLDLIVSELKDSKNSLLDALEHSLQDISMSSQKLGNGISSELIELQKDMKESYRQLVQELRSLYNLQHTHEESQKELMYGVRNDIDALVKTCTTSLNDADIILSDYISDQKSKFESKQQDLIANIGKIVSNFLQEQNESLYTKADILHSHLNDTNSNIRKANEIMNNRSEEFLRNAASQAEIVGANKERIQKTVENGSQLLDSKSKAIHSNSRSMYDHCLALAESQKQGVNLEVQTLDRLLQKVKEHSEDNTKEKHQQLLDLLESLVGNNDNLIDSIKTPHTELQKITDHVLKGTTSLANHTNELLGLGDESLCNLETTIEDTSLVKLETTGDTPSKRELPATPSWTRDSSLIKETTNLNLDSDKKFVRETYTSSNQTNEPDVYDKPSNSSRTSLLRSSRSAYSKMKR.

The tract at residues 1–70 (MAPRVAPGGS…TDHALHDENE (70 aa)) is disordered. Over residues 24 to 37 (PVSTPNSHFRSASN) the composition is skewed to polar residues. Positions 72-421 (NINVVVRVRG…LEYAARAKSI (350 aa)) constitute a Kinesin motor domain. Residue 159-166 (GQTGTGKT) participates in ATP binding. 3 coiled-coil regions span residues 436 to 604 (LIKD…WNLK), 715 to 740 (ISSE…LRSL), and 897 to 955 (LALA…DSIK). 2 consecutive repeats follow at residues 987–998 (DESLCNLETTIE) and 999–1010 (DTSLVKLETTGD). Thr-1011 is subject to Phosphothreonine; by CDC2. The tract at residues 1049–1085 (YTSSNQTNEPDVYDKPSNSSRTSLLRSSRSAYSKMKR) is disordered. Low complexity predominate over residues 1065-1078 (SNSSRTSLLRSSRS).

The protein belongs to the TRAFAC class myosin-kinesin ATPase superfamily. Kinesin family. BimC subfamily.

It localises to the cytoplasm. The protein resides in the cytoskeleton. It is found in the microtubule organizing center. The protein localises to the spindle pole body. Could be a spindle pole body motor. On transition from G2 to M phase of the cell cycle, the spindle pole body duplicates; the daughter pole bodies seed microtubules which interdigitate to form a short spindle that elongates to span the nucleus at metaphase. Mutations at cut7 block spindle formation. This is Kinesin-like protein cut7 (cut7) from Schizosaccharomyces pombe (strain 972 / ATCC 24843) (Fission yeast).